A 1293-amino-acid chain; its full sequence is Cilia- and flagella-associated protein 57 A (1293 aa).

The WD 1 repeat unit spans residues 72–113 (PGTKGITCMTLSPSKRLLAWSEDCDSGIIVVFDLIKLDKLEK). The tract at residues 117-143 (QNYQEPSDKDKLDKQAEKDRRDRFEKE) is disordered. A compositionally biased stretch (basic and acidic residues) spans 122–143 (PSDKDKLDKQAEKDRRDRFEKE). WD repeat units follow at residues 309–348 (PKNE…KNPY), 359–398 (DMKA…MQLN), 411–450 (FHSD…LENS), 535–574 (RGSG…PQKT), and 700–739 (SHFG…YQVK). 3 coiled-coil regions span residues 756–1016 (RDQY…REKT), 1045–1079 (IKEL…FKRT), and 1209–1285 (INHL…QIQN).

The protein belongs to the CFAP57 family. Forms a heterodimer with CFAP57C. Associates with components of the nexin-dynein regulatory complex (N-DRC) and the CFAP184:CFAP263 complex.

The protein localises to the cell projection. It is found in the cilium. Its function is as follows. Associates with components of the nexin-dynein regulatory complex (N-DRC), a key regulator of ciliary/flagellar motility, and might act as an inner dynein arm (IDA) hub or linkage. The protein is Cilia- and flagella-associated protein 57 A (CFAP57A) of Tetrahymena thermophila (strain SB210).